A 603-amino-acid chain; its full sequence is Polypeptide N-acetylgalactosaminyltransferase 10 (603 aa).

The Cytoplasmic portion of the chain corresponds to 1–11; it reads MRRKEKRLLQA. A helical; Signal-anchor for type II membrane protein membrane pass occupies residues 12 to 31; that stretch reads VALVLAALVLLPNVGLWALY. At 32–603 the chain is on the lumenal side; the sequence is RERQPDGTPG…STVLEKFNRN (572 aa). Residues 38 to 59 are disordered; that stretch reads GTPGGSGAAVAPAAGQGSHSRQ. Residues 45 to 55 are compositionally biased toward low complexity; it reads AAVAPAAGQGS. N-linked (GlcNAc...) asparagine glycans are attached at residues Asn124 and Asn146. 5 disulfides stabilise this stretch: Cys135–Cys365, Cys356–Cys432, Cys471–Cys488, Cys523–Cys538, and Cys563–Cys578. The interval 144–253 is catalytic subdomain A; that stretch reads LPNTSIIIPF…VNWLPPLLDR (110 aa). Positions 154, 156, 185, and 214 each coordinate substrate. Asp237 contacts Mn(2+). Position 238 (Ser238) interacts with substrate. A Mn(2+)-binding site is contributed by His239. Residues 311 to 373 form a catalytic subdomain B region; it reads PFESPVMAGG…PCSRVGHIYR (63 aa). Trp342 is a substrate binding site. His370 provides a ligand contact to Mn(2+). Positions 373 and 378 each coordinate substrate. Residues 373 to 384 are flexible loop; sequence RKYVPYKVPAGV. One can recognise a Ricin B-type lectin domain in the interval 458-590; sequence AAWGEIRNVG…SSLTQQWLFE (133 aa). N-linked (GlcNAc...) asparagine glycosylation occurs at Asn593.

The protein belongs to the glycosyltransferase 2 family. GalNAc-T subfamily. Requires Mn(2+) as cofactor. As to expression, widely expressed. Expressed at high level in small intestine, and at intermediate levels in stomach, pancreas, ovary, thyroid gland and spleen. Weakly expressed in other tissues.

It localises to the golgi apparatus membrane. It carries out the reaction L-seryl-[protein] + UDP-N-acetyl-alpha-D-galactosamine = a 3-O-[N-acetyl-alpha-D-galactosaminyl]-L-seryl-[protein] + UDP + H(+). It catalyses the reaction L-threonyl-[protein] + UDP-N-acetyl-alpha-D-galactosamine = a 3-O-[N-acetyl-alpha-D-galactosaminyl]-L-threonyl-[protein] + UDP + H(+). Its pathway is protein modification; protein glycosylation. In terms of biological role, catalyzes the initial reaction in O-linked oligosaccharide biosynthesis, the transfer of an N-acetyl-D-galactosamine residue to a serine or threonine residue on the protein receptor. Has activity toward Muc5Ac and EA2 peptide substrates. This Homo sapiens (Human) protein is Polypeptide N-acetylgalactosaminyltransferase 10 (GALNT10).